The chain runs to 657 residues: Conserved oligomeric Golgi complex subunit 6 (657 aa).

It belongs to the COG6 family. In terms of assembly, component of the conserved oligomeric Golgi complex which is composed of eight different subunits and is required for normal Golgi morphology and localization.

It is found in the golgi apparatus membrane. Required for normal Golgi function. The chain is Conserved oligomeric Golgi complex subunit 6 (COG6) from Homo sapiens (Human).